Reading from the N-terminus, the 912-residue chain is Ubiquitin carboxyl-terminal hydrolase 3 (912 aa).

Basic and acidic residues predominate over residues 1 to 11; it reads MNMQDANKEES. 4 disordered regions span residues 1–30, 68–176, 241–384, and 396–417; these read MNMQ…TNMQ, IYHQ…SYSS, NSSV…TTAG, and GKSS…YVPP. Composition is skewed to low complexity over residues 82–95, 102–140, and 159–176; these read NNIN…NNNI, SNGI…SNNH, and TNSS…SYSS. A compositionally biased stretch (basic residues) spans 249 to 259; that stretch reads AHHHTKSHSIP. The segment covering 260 to 310 has biased composition (basic and acidic residues); sequence KHNEEVKTETHGEEEDAHDKKPHASKDAHELKKKTEVKKEDAKQDRNEKVI. Residues 335–355 are compositionally biased toward low complexity; the sequence is SKTSSPSPSPPAAKSWSAIAS. 2 stretches are compositionally biased toward polar residues: residues 361–384 and 396–406; these read RQAS…TTAG and GKSSSPLLSKQ. The USP domain maps to 460–911; the sequence is RGIINRANIC…TAYILMYQKR (452 aa). C469 acts as the Nucleophile in catalysis. H861 (proton acceptor) is an active-site residue.

The protein belongs to the peptidase C19 family. As to quaternary structure, heterotetramer with BRE5; contains two molecules of BRE5 and two molecules of UBP3. Forms a complex composed of CDC48, DOA1, deubiquitinase UBP3 and probably BRE5. Within the complex interacts directly with DOA1 and CDC48 in a BRE5-independent manner.

It catalyses the reaction Thiol-dependent hydrolysis of ester, thioester, amide, peptide and isopeptide bonds formed by the C-terminal Gly of ubiquitin (a 76-residue protein attached to proteins as an intracellular targeting signal).. In terms of biological role, has an ATP-independent isopeptidase activity, cleaving at the C-terminus of the ubiquitin moiety in natural or engineered linear fusion proteins, irrespective of their size or the presence of an N-terminal extension to ubiquitin. Plays a role in regulation of silencing by interacting with SIR4. Also, in conjunction with BRE5, cleaves ubiquitin, leading to the subsequent mono-ubiquitination of SEC23. Required for ribophagy, a process which relocalizes ribosomal particles into the vacuole for degradation in response to starvation. This chain is Ubiquitin carboxyl-terminal hydrolase 3 (UBP3), found in Saccharomyces cerevisiae (strain ATCC 204508 / S288c) (Baker's yeast).